A 622-amino-acid chain; its full sequence is Chaperone protein HscA homolog (622 aa).

The protein belongs to the heat shock protein 70 family.

Functionally, chaperone involved in the maturation of iron-sulfur cluster-containing proteins. Has a low intrinsic ATPase activity which is markedly stimulated by HscB. The sequence is that of Chaperone protein HscA homolog from Burkholderia cenocepacia (strain ATCC BAA-245 / DSM 16553 / LMG 16656 / NCTC 13227 / J2315 / CF5610) (Burkholderia cepacia (strain J2315)).